A 363-amino-acid chain; its full sequence is Translocating chain-associated membrane protein 1-like 1 (363 aa).

At 1-29 (MGLRKKNARNPPVLSHEFMVQNHADMVSC) the chain is on the cytoplasmic side. The chain crosses the membrane as a helical span at residues 30 to 50 (VGMFFVLGLMFEGTSEMSIAF). At 51-80 (LTLQHGVVVPAEGLPSGSRTLYHYGVKDLA) the chain is on the lumenal side. Residues 81–101 (TVFFYMLVAIIIHATIQEYVL) form a helical membrane-spanning segment. The Cytoplasmic segment spans residues 102–120 (DKLSRRLQLTKGKQNKLNE). Residues 116 to 324 (NKLNEAGQLS…TVWLQRWLED (209 aa)) enclose the TLC domain. Residues 121–141 (AGQLSVFYIVSGIWGMIILAS) traverse the membrane as a helical segment. Topologically, residues 142–159 (ENCLSDPTLLWKSQPHNM) are lumenal. Residues 160–179 (MTFQMKFFYISQLAYWFHSF) traverse the membrane as a helical segment. Over 180–191 (PELYFQKVRKQD) the chain is Cytoplasmic. The chain crosses the membrane as a helical span at residues 192–214 (IPGQLIYIGLHLFHIGGAYLLYL). The Lumenal segment spans residues 215–218 (NHLG). The chain crosses the membrane as a helical span at residues 219-241 (LLLLMLHYAVELLSSVCSLLYFG). Over 242-250 (DERYQKGLS) the chain is Cytoplasmic. Residues 251 to 271 (LWPIVFISGRLVTLIVSVVTV) traverse the membrane as a helical segment. The Lumenal segment spans residues 272 to 295 (GLHLAGTNRNGNALSGNVNVLAAK). The helical transmembrane segment at 296–316 (IAVLSSSCSIQVYITWTLTTV) threads the bilayer. Over 317–363 (WLQRWLEDANLHVCGRKRRSRARKGTENGVENPNRIDSPPKKKEKAP) the chain is Cytoplasmic. The disordered stretch occupies residues 338–363 (ARKGTENGVENPNRIDSPPKKKEKAP). The span at 354 to 363 (SPPKKKEKAP) shows a compositional bias: basic and acidic residues.

This sequence belongs to the TRAM family.

It localises to the endoplasmic reticulum membrane. In terms of biological role, stimulatory or required for the translocation of secretory proteins across the ER membrane. This chain is Translocating chain-associated membrane protein 1-like 1 (Tram1l1), found in Mus musculus (Mouse).